Reading from the N-terminus, the 583-residue chain is SHC-transforming protein 1 (583 aa).

At Met1 the chain carries N-acetylmethionine. Disordered stretches follow at residues 1-92 (MDLL…DDGE) and 113-137 (KLSGGGGRRTRVEGGQLGGEEWTRH). Residues 16–44 (ESLSSLEEGASGSTPPEELPSPSASSLGP) are compositionally biased toward low complexity. Ser36 carries the phosphoserine modification. Ser139 carries the post-translational modification Phosphoserine. Lys154 bears the N6-acetyllysine mark. One can recognise a PID domain in the interval 156–339 (MGPGVSYLVR…AGFDGSAWDE (184 aa)). Residues 340 to 487 (EEEEPPDHQY…SMAEQLRGEP (148 aa)) are CH1. Phosphotyrosine is present on residues Tyr349 and Tyr350. The interval 372 to 416 (AAPGAARSTAPSAQTPSHLGATLPVGQPVGGDPEVRKQMPPPPPC) is disordered. Tyr427 is subject to Phosphotyrosine. Ser453 carries the post-translational modification Phosphoserine. In terms of domain architecture, SH2 spans 488–579 (WFHGKLSRRE…GSELCLQQPV (92 aa)).

In terms of assembly, interacts with CPNE3; this interaction may mediate the binding of CPNE3 with ERBB2. Interacts with the Trk receptors NTRK1, NTRK2 and NTRK3; in a phosphotyrosine-dependent manner. Interacts with the NPXY motif of tyrosine-phosphorylated IGF1R and INSR in vitro via the PID domain. Once activated, binds to GRB2. Interacts with tyrosine-phosphorylated CD3T and DDR2. Interacts with the N-terminal region of APS. Interacts with phosphorylated LRP1 and IRS4. Interacts with INPP5D/SHIP1 and INPPL1/SHIP2. Interacts with ALK, GAB2, GRB7 and KIT. Interacts with PTPN6/SHP (tyrosine phosphorylated). Identified in a complex containing FGFR4, NCAM1, CDH2, PLCG1, FRS2, SRC, SHC1, GAP43 and CTTN. Interacts with FLT4 (tyrosine-phosphorylated). Interacts with EPHB1 and GRB2; activates the MAPK/ERK cascade to regulate cell migration. Interacts with PDGFRB (tyrosine-phosphorylated). Interacts with ERBB4. Interacts with TEK/TIE2 (tyrosine-phosphorylated). Interacts with PTK2/FAK1. Interacts with CEACAM1; this interaction is CEACAM1-phosphorylation-dependent and mediates interaction with EGFR or INSR resulting in decrease coupling of SHC1 to the MAPK3/ERK1-MAPK1/ERK2 pathway. Interacts (via PID domain) with PEAK1 (when phosphorylated). Found in a complex with PPP1CA, PPP1CC, SHC1 and PEAK1. Phosphorylated by activated epidermal growth factor receptor. Phosphorylated in response to KIT signaling. Tyrosine phosphorylated in response to FLT3 and FLT4 signaling and by ligand-activated ALK. Tyrosine phosphorylated by ligand-activated PDGFRB. Tyrosine phosphorylated by TEK/TIE2. May be tyrosine phosphorylated by activated PTK2/FAK1. Tyrosine phosphorylated by activated PTK2B/PYK2. Dephosphorylation by PTPN2 may regulate interaction with GRB2.

It is found in the cytoplasm. It localises to the cell junction. Its subcellular location is the focal adhesion. Signaling adapter that couples activated growth factor receptors to signaling pathways. Participates in a signaling cascade initiated by activated KIT and KITLG/SCF. Participates in signaling downstream of the angiopoietin receptor TEK/TIE2, and plays a role in the regulation of endothelial cell migration and sprouting angiogenesis. The sequence is that of SHC-transforming protein 1 (SHC1) from Pongo abelii (Sumatran orangutan).